The primary structure comprises 271 residues: Formamidopyrimidine-DNA glycosylase (271 aa).

Proline 2 functions as the Schiff-base intermediate with DNA in the catalytic mechanism. Glutamate 3 acts as the Proton donor in catalysis. Residue lysine 57 is the Proton donor; for beta-elimination activity of the active site. 3 residues coordinate DNA: histidine 90, arginine 109, and lysine 150. The segment at 235–269 adopts an FPG-type zinc-finger fold; it reads LVYGNKDKPCPKCGGKIESLIIGQRNSFFCPKCQK. The Proton donor; for delta-elimination activity role is filled by arginine 259.

The protein belongs to the FPG family. In terms of assembly, monomer. Zn(2+) is required as a cofactor.

It catalyses the reaction Hydrolysis of DNA containing ring-opened 7-methylguanine residues, releasing 2,6-diamino-4-hydroxy-5-(N-methyl)formamidopyrimidine.. The enzyme catalyses 2'-deoxyribonucleotide-(2'-deoxyribose 5'-phosphate)-2'-deoxyribonucleotide-DNA = a 3'-end 2'-deoxyribonucleotide-(2,3-dehydro-2,3-deoxyribose 5'-phosphate)-DNA + a 5'-end 5'-phospho-2'-deoxyribonucleoside-DNA + H(+). In terms of biological role, involved in base excision repair of DNA damaged by oxidation or by mutagenic agents. Acts as a DNA glycosylase that recognizes and removes damaged bases. Has a preference for oxidized purines, such as 7,8-dihydro-8-oxoguanine (8-oxoG). Has AP (apurinic/apyrimidinic) lyase activity and introduces nicks in the DNA strand. Cleaves the DNA backbone by beta-delta elimination to generate a single-strand break at the site of the removed base with both 3'- and 5'-phosphates. The sequence is that of Formamidopyrimidine-DNA glycosylase from Haemophilus influenzae (strain PittEE).